A 556-amino-acid polypeptide reads, in one-letter code: Formate--tetrahydrofolate ligase (556 aa).

65–72 (TPAGEGKT) contributes to the ATP binding site.

The protein belongs to the formate--tetrahydrofolate ligase family.

It carries out the reaction (6S)-5,6,7,8-tetrahydrofolate + formate + ATP = (6R)-10-formyltetrahydrofolate + ADP + phosphate. It participates in one-carbon metabolism; tetrahydrofolate interconversion. The polypeptide is Formate--tetrahydrofolate ligase (Hyphomonas neptunium (strain ATCC 15444)).